A 492-amino-acid chain; its full sequence is Bifunctional protein GlmU (492 aa).

The segment at 1–241 (MTFRGDTAVV…SALVAGVNDR (241 aa)) is pyrophosphorylase. Residues 12-15 (LAAG), lysine 26, glutamine 83, and 88-89 (GT) contribute to the UDP-N-acetyl-alpha-D-glucosamine site. Aspartate 114 is a binding site for Mg(2+). Residues glycine 151, glutamate 166, asparagine 181, and asparagine 239 each coordinate UDP-N-acetyl-alpha-D-glucosamine. Residue asparagine 239 coordinates Mg(2+). The interval 242-262 (VQLAQLGAELNRRIVAAHQMA) is linker. Positions 263–492 (GVTVIDPATT…TPPPDADHPP (230 aa)) are N-acetyltransferase. UDP-N-acetyl-alpha-D-glucosamine-binding residues include arginine 344 and lysine 362. Histidine 374 acts as the Proton acceptor in catalysis. UDP-N-acetyl-alpha-D-glucosamine contacts are provided by tyrosine 377 and asparagine 388. Residues alanine 391, 397 to 398 (NY), and alanine 434 each bind acetyl-CoA. The disordered stretch occupies residues 443–492 (PPGALAVSGGPQRNIEDWVQQKRPGTPSAEAARKASAEQSTPPPDADHPP).

The protein in the N-terminal section; belongs to the N-acetylglucosamine-1-phosphate uridyltransferase family. It in the C-terminal section; belongs to the transferase hexapeptide repeat family. In terms of assembly, homotrimer. Requires Mg(2+) as cofactor.

It is found in the cytoplasm. The enzyme catalyses alpha-D-glucosamine 1-phosphate + acetyl-CoA = N-acetyl-alpha-D-glucosamine 1-phosphate + CoA + H(+). It carries out the reaction N-acetyl-alpha-D-glucosamine 1-phosphate + UTP + H(+) = UDP-N-acetyl-alpha-D-glucosamine + diphosphate. Its pathway is nucleotide-sugar biosynthesis; UDP-N-acetyl-alpha-D-glucosamine biosynthesis; N-acetyl-alpha-D-glucosamine 1-phosphate from alpha-D-glucosamine 6-phosphate (route II): step 2/2. It participates in nucleotide-sugar biosynthesis; UDP-N-acetyl-alpha-D-glucosamine biosynthesis; UDP-N-acetyl-alpha-D-glucosamine from N-acetyl-alpha-D-glucosamine 1-phosphate: step 1/1. The protein operates within bacterial outer membrane biogenesis; LPS lipid A biosynthesis. Functionally, catalyzes the last two sequential reactions in the de novo biosynthetic pathway for UDP-N-acetylglucosamine (UDP-GlcNAc). The C-terminal domain catalyzes the transfer of acetyl group from acetyl coenzyme A to glucosamine-1-phosphate (GlcN-1-P) to produce N-acetylglucosamine-1-phosphate (GlcNAc-1-P), which is converted into UDP-GlcNAc by the transfer of uridine 5-monophosphate (from uridine 5-triphosphate), a reaction catalyzed by the N-terminal domain. The polypeptide is Bifunctional protein GlmU (Mycobacterium ulcerans (strain Agy99)).